The following is a 286-amino-acid chain: Energy-coupling factor transporter ATP-binding protein EcfA2 (286 aa).

In terms of domain architecture, ABC transporter spans 3–244; sequence IKVENVSFIY…AERLEKIGLS (242 aa). 40–47 is an ATP binding site; that stretch reads GHTGSGKS.

Belongs to the ABC transporter superfamily. Energy-coupling factor EcfA family. Forms a stable energy-coupling factor (ECF) transporter complex composed of 2 membrane-embedded substrate-binding proteins (S component), 2 ATP-binding proteins (A component) and 2 transmembrane proteins (T component).

It localises to the cell membrane. ATP-binding (A) component of a common energy-coupling factor (ECF) ABC-transporter complex. Unlike classic ABC transporters this ECF transporter provides the energy necessary to transport a number of different substrates. This Caldanaerobacter subterraneus subsp. tengcongensis (strain DSM 15242 / JCM 11007 / NBRC 100824 / MB4) (Thermoanaerobacter tengcongensis) protein is Energy-coupling factor transporter ATP-binding protein EcfA2.